The chain runs to 63 residues: Small ribosomal subunit protein eS30 (63 aa).

The disordered stretch occupies residues 1-33; sequence MGKVHGSLARAGKVKSQTPKVEKQEKPKKPQGR.

Belongs to the eukaryotic ribosomal protein eS30 family. In terms of assembly, component of the small ribosomal subunit. Mature ribosomes consist of a small (40S) and a large (60S) subunit. The 40S subunit contains about 32 different proteins and 1 molecule of RNA (18S). The 60S subunit contains 45 different proteins and 3 molecules of RNA (25S, 5.8S and 5S).

It is found in the cytoplasm. In terms of biological role, component of the ribosome, a large ribonucleoprotein complex responsible for the synthesis of proteins in the cell. The small ribosomal subunit (SSU) binds messenger RNAs (mRNAs) and translates the encoded message by selecting cognate aminoacyl-transfer RNA (tRNA) molecules. The large subunit (LSU) contains the ribosomal catalytic site termed the peptidyl transferase center (PTC), which catalyzes the formation of peptide bonds, thereby polymerizing the amino acids delivered by tRNAs into a polypeptide chain. The nascent polypeptides leave the ribosome through a tunnel in the LSU and interact with protein factors that function in enzymatic processing, targeting, and the membrane insertion of nascent chains at the exit of the ribosomal tunnel. The polypeptide is Small ribosomal subunit protein eS30 (RPS30) (Candida albicans (strain SC5314 / ATCC MYA-2876) (Yeast)).